The chain runs to 263 residues: Endonuclease 8 (263 aa).

Proline 2 acts as the Schiff-base intermediate with DNA in catalysis. The active-site Proton donor is the glutamate 3. Catalysis depends on lysine 53, which acts as the Proton donor; for beta-elimination activity. DNA-binding residues include glutamine 70, arginine 125, and asparagine 169. An FPG-type zinc finger spans residues 229 to 263; sequence KVFHRDGEPCERCGSIIEKTTLSSRPFYWCPGCQH. Arginine 253 functions as the Proton donor; for delta-elimination activity in the catalytic mechanism.

The protein belongs to the FPG family. The cofactor is Zn(2+).

The catalysed reaction is 2'-deoxyribonucleotide-(2'-deoxyribose 5'-phosphate)-2'-deoxyribonucleotide-DNA = a 3'-end 2'-deoxyribonucleotide-(2,3-dehydro-2,3-deoxyribose 5'-phosphate)-DNA + a 5'-end 5'-phospho-2'-deoxyribonucleoside-DNA + H(+). Involved in base excision repair of DNA damaged by oxidation or by mutagenic agents. Acts as a DNA glycosylase that recognizes and removes damaged bases. Has a preference for oxidized pyrimidines, such as thymine glycol, 5,6-dihydrouracil and 5,6-dihydrothymine. Has AP (apurinic/apyrimidinic) lyase activity and introduces nicks in the DNA strand. Cleaves the DNA backbone by beta-delta elimination to generate a single-strand break at the site of the removed base with both 3'- and 5'-phosphates. This chain is Endonuclease 8, found in Escherichia coli O17:K52:H18 (strain UMN026 / ExPEC).